A 96-amino-acid polypeptide reads, in one-letter code: Dynein light chain roadblock-type 1 (96 aa).

At alanine 2 the chain carries N-acetylalanine.

It belongs to the GAMAD family. Homodimer. The cytoplasmic dynein 1 complex consists of two catalytic heavy chains (HCs) and a number of non-catalytic subunits presented by intermediate chains (ICs), light intermediate chains (LICs) and light chains (LCs); the composition seems to vary in respect to the IC, LIC and LC composition. The heavy chain homodimer serves as a scaffold for the probable homodimeric assembly of the respective non-catalytic subunits. The ICs and LICs bind directly to the HC dimer and the LCs assemble on the IC dimer. Interacts with DYNLRB2. Interacts with DYNC1I1 and DYNC1I2. Interacts with RAB6A isoform 1 (GTP-bound); the interaction is direct. Interacts with RAB6A isoform 2 (GDP-bound); the interaction is direct. Interacts with RAB6B (GDP-bound). In terms of tissue distribution, high expression in heart, liver, brain and pancreas; moderate in placenta, skeletal muscle and kidney; low in lung, prostate, testis, small intestine and colon. Isoform 1 expression is up-regulated in 64% hepatocellular carcinoma (HCC) patients.

It localises to the cytoplasm. The protein localises to the cytoskeleton. Functionally, acts as one of several non-catalytic accessory components of the cytoplasmic dynein 1 complex that are thought to be involved in linking dynein to cargos and to adapter proteins that regulate dynein function. Cytoplasmic dynein 1 acts as a motor for the intracellular retrograde motility of vesicles and organelles along microtubules. This Homo sapiens (Human) protein is Dynein light chain roadblock-type 1.